The following is a 141-amino-acid chain: Large ribosomal subunit protein uL11B/uL11C (141 aa).

The protein belongs to the universal ribosomal protein uL11 family. As to quaternary structure, part of the ribosomal stalk of the 50S ribosomal subunit. Interacts with L10 and the large rRNA to form the base of the stalk. L10 forms an elongated spine to which L12 dimers bind in a sequential fashion forming a multimeric L10(L12)X complex. One or more lysine residues are methylated.

Its function is as follows. Forms part of the ribosomal stalk which helps the ribosome interact with GTP-bound translation factors. The polypeptide is Large ribosomal subunit protein uL11B/uL11C (Bacillus cereus (strain ATCC 14579 / DSM 31 / CCUG 7414 / JCM 2152 / NBRC 15305 / NCIMB 9373 / NCTC 2599 / NRRL B-3711)).